The primary structure comprises 134 residues: Transcription antitermination protein NusB (134 aa).

Belongs to the NusB family.

Involved in transcription antitermination. Required for transcription of ribosomal RNA (rRNA) genes. Binds specifically to the boxA antiterminator sequence of the ribosomal RNA (rrn) operons. This is Transcription antitermination protein NusB from Shewanella oneidensis (strain ATCC 700550 / JCM 31522 / CIP 106686 / LMG 19005 / NCIMB 14063 / MR-1).